A 432-amino-acid polypeptide reads, in one-letter code: MYKLDNNDIDDETNNSVSLTSLLEFLDPIASKVVSKYYHGSHLSKAEQKLRNFEGFRRRKPHHEHDSHHPHHLNRSRSFLQLEDFKVRALQRIRNLDKPLDSIFFKNSSRLEKAFYPFTLFNIFFIGFLMGRFPEWFHVYYTILFFVLMPIRFYTYYKTKNHYFLADFCYFVNMLCLLFIWIFPYSYSLFQSCFAFTFGTLCFAVITWRNSLVIHSIDKTTSCFIHIIPPCVMYVIYHGLPLEYKIERFPGAIIQSELDIKKNILWTSLYYLVWQSLYHYFITLKKSSKIKSGERMTSFEYLTTHQFKNFWAVKLRSPWPMIIYTLSQYFYQLFTMLLCGIWIRYKLAAALFLTIVFLWASHNGATYYIDHYGKNFEKEVDRLRLEVENLQQKLQPDSDAVISDASVNDKDYLNVNRDEDFDDSSSVSSKSD.

Residues methionine 1–arginine 110 are Cytoplasmic-facing. Residue serine 78 is modified to Phosphoserine. A helical membrane pass occupies residues leucine 111 to glycine 131. Residue arginine 132 is a topological domain, lumenal. A helical membrane pass occupies residues phenylalanine 133–phenylalanine 153. Residues tyrosine 154 to histidine 162 lie on the Cytoplasmic side of the membrane. Residues tyrosine 163–phenylalanine 183 form a helical membrane-spanning segment. Residues proline 184–tyrosine 187 are Lumenal-facing. The chain crosses the membrane as a helical span at residues serine 188–tryptophan 208. Residues arginine 209–threonine 221 are Cytoplasmic-facing. The chain crosses the membrane as a helical span at residues serine 222–leucine 242. At glutamate 243–asparagine 263 the chain is on the lumenal side. Residues isoleucine 264–leucine 284 form a helical membrane-spanning segment. Residues lysine 285–proline 318 are Cytoplasmic-facing. Residues tryptophan 319–cysteine 339 form a helical membrane-spanning segment. At glycine 340–lysine 346 the chain is on the lumenal side. A helical membrane pass occupies residues leucine 347–isoleucine 369. At aspartate 370 to aspartate 432 the chain is on the cytoplasmic side. The segment at leucine 413–aspartate 432 is disordered.

It belongs to the GPC1 family.

The protein localises to the membrane. It catalyses the reaction sn-glycerol 3-phosphocholine + an acyl-CoA = a 1-acyl-sn-glycero-3-phosphocholine + CoA. The enzyme catalyses sn-glycero-3-phosphoethanolamine + an acyl-CoA = a monoacyl-sn-glycero-3-phosphoethanolamine + CoA. The catalysed reaction is sn-glycero-3-phosphoethanolamine + (9Z)-octadecenoyl-CoA = (9Z-octadecenoyl)-sn-glycero-3-phosphoethanolamine + CoA. It carries out the reaction sn-glycerol 3-phosphocholine + hexadecanoyl-CoA = hexadecanoyl-sn-glycero-3-phosphocholine + CoA. It catalyses the reaction (9Z,12Z)-octadecadienoyl-CoA + sn-glycerol 3-phosphocholine = (9Z,12Z-octadecadienoyl)-sn-glycero-3-phosphocholine + CoA. The enzyme catalyses (12R)-hydroxy-(9Z)-octadecenoyl-CoA + sn-glycerol 3-phosphocholine = (12R-hydroxy-9Z-octadecenoyl)-sn-glycero-3-phosphocholine + CoA. The catalysed reaction is (9Z,12Z,15Z)-octadecatrienoyl-CoA + sn-glycerol 3-phosphocholine = (9Z,12Z,15Z-octadecatrienoyl)-sn-glycero-3-phosphocholine + CoA. It carries out the reaction sn-glycerol 3-phosphocholine + (9Z)-octadecenoyl-CoA = (9Z-octadecenoyl)-sn-glycero-3-phosphocholine + CoA. It catalyses the reaction 1-(9Z-octadecenoyl)-sn-glycero-3-phosphoethanolamine + sn-glycerol 3-phosphocholine = (9Z-octadecenoyl)-sn-glycero-3-phosphocholine + sn-glycero-3-phosphoethanolamine. With respect to regulation, the GPCAT activity is sensitive to N-ethylmaleimide, phenanthroline, and divalent cations including Ca(2+), Mg(2+), Mn(2+) and Zn(2+). The activity is also inhibited by glycerol-3-phosphate (G3P). Glycerophosphocholine acyltransferase (GPCAT) that utilizes acyl-CoA to acylate glycero-3-phosphocholine (GPC), forming lysophosphatidylcholine (LPC). Shows broad acyl specificities with a preference for 16:0-CoA, polyunsaturated acyl-CoA, and the hydroxylated ricinoleoyl-CoA. Also catalyzes the acylation of glycero-3-phosphoethanolamine (GPE) with acyl-CoA. In addition to acyl-CoA, GPCAT efficiently utilizes LPC and lysophosphatidylethanolamine (LPE) as acyl donors in the acylation of GPC. Contributes to the maintenance of phosphatidylcholine (PC) homeostasis and might also have specific functions in acyl editing of PC, such as transferring acyl groups modified at the sn-2 position of PC to the sn-1. Involved in postsynthetic PC remodeling that produces more saturated PC species. In Saccharomyces cerevisiae (strain ATCC 204508 / S288c) (Baker's yeast), this protein is Glycerophosphocholine acyltransferase 1.